The primary structure comprises 230 residues: Ribosomal RNA small subunit methyltransferase Nep1 (230 aa).

S-adenosyl-L-methionine is bound by residues Gly-184, Gly-189, and 205 to 210; that span reads IYNKPL.

It belongs to the class IV-like SAM-binding methyltransferase superfamily. RNA methyltransferase NEP1 family. In terms of assembly, homodimer.

The catalysed reaction is a pseudouridine in rRNA + S-adenosyl-L-methionine = an N(1)-methylpseudouridine in rRNA + S-adenosyl-L-homocysteine + H(+). Methyltransferase involved in ribosomal biogenesis. Specifically catalyzes the N1-methylation of the pseudouridine corresponding to position 914 in M.jannaschii 16S rRNA. This Staphylothermus marinus (strain ATCC 43588 / DSM 3639 / JCM 9404 / F1) protein is Ribosomal RNA small subunit methyltransferase Nep1.